The sequence spans 510 residues: MKDHLIIFDTTLRDGEQSPGASMTREEKVRIARQLERMRVDVIEAGFPAASNGDFEAVKAVAAAIKGSTICGLARAIEGDIRRAGEALRGANSARIHTFIATSPIHMEKKLRMSPDQVVEQAVKAVKFARQYTDDVEFSPEDAGRSDITFLCRVLEAVIDAGAGTVNIPDTVGYTMPQQFGELIRTLRERIPNSDKVIFSVHCHNDLGLAVANSLSAVMNGARQVECTVNGLGERAGNASLEEVVMAVRTRQDFFPCDTRIDSVHIVPASKLVSGITGFPVQPNKAIVGANAFAHESGIHQDGVLKHRETYEIMRAEDVGWGANKLLLGKHSGRNAFRSRLAELGIELESEETLNATFMRFKELADKKHDIFDEDLHALVSDDAAALQEHYKLLSLTAHSETGETPHASIVIGEEGRESRAESDGSGPVDATFRAIEKILNSGVELQLYSVNAITSGTDSQGEVTVRLQKSGRIVNGNGADTDIVVASAKAYLSALNKLHSKLERAHPQV.

The 263-residue stretch at 5 to 267 (LIIFDTTLRD…DTRIDSVHIV (263 aa)) folds into the Pyruvate carboxyltransferase domain. Mn(2+) is bound by residues D14, H202, H204, and N238. The interval 392–510 (KLLSLTAHSE…SKLERAHPQV (119 aa)) is regulatory domain.

It belongs to the alpha-IPM synthase/homocitrate synthase family. LeuA type 1 subfamily. In terms of assembly, homodimer. Mn(2+) is required as a cofactor.

It localises to the cytoplasm. The catalysed reaction is 3-methyl-2-oxobutanoate + acetyl-CoA + H2O = (2S)-2-isopropylmalate + CoA + H(+). The protein operates within amino-acid biosynthesis; L-leucine biosynthesis; L-leucine from 3-methyl-2-oxobutanoate: step 1/4. Its function is as follows. Catalyzes the condensation of the acetyl group of acetyl-CoA with 3-methyl-2-oxobutanoate (2-ketoisovalerate) to form 3-carboxy-3-hydroxy-4-methylpentanoate (2-isopropylmalate). In Nitrosospira multiformis (strain ATCC 25196 / NCIMB 11849 / C 71), this protein is 2-isopropylmalate synthase.